The primary structure comprises 529 residues: MMMTKQKPTLTERLNLGDEVRELKLGATFNPKNTSTAFHTIKYDFKPASVDTSRMATVDVGSNNQVTVTVPNLESSGVPHTVYKGNHKKYTKECLIIYDKETGVITLEKLNHNIQVKKTRSEMTNKPSLMPAANAGPLMSGANGGGPIPSSMMAAAGSGSGTAPKLENSTMRISSKTKVSTGSRRNNIIDFKPRNSPMQQSSPSRPVVSHRSPQSAPAWHANNAQQTLPSIPMITDDDDFGLNAALHNGGGHANISGSSTGSSSGQPDYVSSSHMGKQRQALPQGHAKRQQMTQQRSSPPMHHQQHQNQQQQQQNYGRVGGSSNYAQQQHQQQMQQQQQQHQQQQQRASFSHSNHSNSMPLDINSPSHHDHVTQSVAQAAAVLEQQIGGEPSASSSSSESDSSDTDSGSDSDDSTDDDRPTQQKQQNSATHQQQHHQMQQQHQQQQQHMHQLPNLGLGSISPAYNSHYQHQQQQQQPPQQHSHHHHQQQQQQQQQQQQSGIYASNGGFPNDLLQNDLQLSSNSSDDDDD.

2 disordered regions span residues 155 to 235 (AAGS…PMIT) and 253 to 529 (ANIS…DDDD). Over residues 167–186 (ENSTMRISSKTKVSTGSRRN) the composition is skewed to polar residues. 4 stretches are compositionally biased toward low complexity: residues 194–215 (RNSP…SPQS), 256–265 (SGSSTGSSSG), 306–315 (HQNQQQQQQN), and 327–346 (QQQH…QQQQ). Ser-196 carries the phosphoserine modification. Residues 347-359 (RASFSHSNHSNSM) show a composition bias toward polar residues. Positions 401-416 (DSSDTDSGSDSDDSTD) are enriched in acidic residues. Composition is skewed to low complexity over residues 431–451 (HQQQ…HMHQ), 469–480 (QHQQQQQQPPQQ), 488–499 (QQQQQQQQQQQS), and 510–523 (NDLL…SSNS).

This sequence belongs to the EAF family.

The protein resides in the nucleus. Promotes transcriptional elongation by Su(Tpl)/ELL. Essential for development. In Drosophila grimshawi (Hawaiian fruit fly), this protein is Ell-associated factor Eaf.